Here is a 340-residue protein sequence, read N- to C-terminus: Nod factor export ATP-binding protein I (340 aa).

Residues Met1–His24 are compositionally biased toward basic and acidic residues. The disordered stretch occupies residues Met1–Pro34. Polar residues predominate over residues Gly25–Pro34. The 231-residue stretch at Val42–Tyr272 folds into the ABC transporter domain. Residue Gly74 to Ser81 participates in ATP binding.

Belongs to the ABC transporter superfamily. Lipooligosaccharide exporter (TC 3.A.1.102) family. As to quaternary structure, the complex is composed of two ATP-binding proteins (NodI) and two transmembrane proteins (NodJ).

The protein localises to the cell inner membrane. Functionally, part of the ABC transporter complex NodIJ involved in the export of the nodulation factors (Nod factors), the bacterial signal molecules that induce symbiosis and subsequent nodulation induction. Nod factors are LCO (lipo-chitin oligosaccharide), a modified beta-1,4-linked N-acetylglucosamine oligosaccharide. This subunit is responsible for energy coupling to the transport system. The polypeptide is Nod factor export ATP-binding protein I (Mesorhizobium japonicum (strain LMG 29417 / CECT 9101 / MAFF 303099) (Mesorhizobium loti (strain MAFF 303099))).